A 437-amino-acid chain; its full sequence is Tol-Pal system protein TolB (437 aa).

A signal peptide spans 1–30 (MLPTPSRSHKLSGYAAVLFFLWLVCSPAQA). Positions 410 to 423 (SDGRTRQQLSTQTG) are enriched in polar residues. The tract at residues 410–437 (SDGRTRQQLSTQTGDIREPAWGPLRRLQ) is disordered.

This sequence belongs to the TolB family. As to quaternary structure, the Tol-Pal system is composed of five core proteins: the inner membrane proteins TolA, TolQ and TolR, the periplasmic protein TolB and the outer membrane protein Pal. They form a network linking the inner and outer membranes and the peptidoglycan layer.

The protein resides in the periplasm. Functionally, part of the Tol-Pal system, which plays a role in outer membrane invagination during cell division and is important for maintaining outer membrane integrity. This chain is Tol-Pal system protein TolB, found in Nitrosospira multiformis (strain ATCC 25196 / NCIMB 11849 / C 71).